The sequence spans 667 residues: Tripartite terminase subunit 3 (667 aa).

Positions 208-215 (VPRRHGKT) match the Walker A motif motif. A Walker B motif motif is present at residues 301–306 (LLIVDE). The For ATPase activity role is filled by glutamate 306. Catalysis depends on for nuclease activity residues aspartate 459, glutamate 530, and aspartate 644.

This sequence belongs to the herpesviridae TRM3 protein family. Interacts with the terminase subunits TRM1 and TRM2. Interacts with portal protein.

The protein localises to the host nucleus. Functionally, component of the molecular motor that translocates viral genomic DNA in empty capsid during DNA packaging. Forms a tripartite terminase complex together with TRM1 and TRM2 in the host cytoplasm. Once the complex reaches the host nucleus, it interacts with the capsid portal vertex. This portal forms a ring in which genomic DNA is translocated into the capsid. TRM3 carries an RNase H-like nuclease activity that plays an important role for the cleavage of concatemeric viral DNA into unit length genomes. This chain is Tripartite terminase subunit 3, found in Human herpesvirus 6A (strain Uganda-1102) (HHV-6 variant A).